Here is a 479-residue protein sequence, read N- to C-terminus: Glutamate--tRNA ligase (479 aa).

The 'HIGH' region motif lies at 9–19 (PSPTGNLHIGT). The 'KMSKS' region motif lies at 243–247 (KLSKR). ATP is bound at residue Lys246.

The protein belongs to the class-I aminoacyl-tRNA synthetase family. Glutamate--tRNA ligase type 1 subfamily. Monomer.

It is found in the cytoplasm. It catalyses the reaction tRNA(Glu) + L-glutamate + ATP = L-glutamyl-tRNA(Glu) + AMP + diphosphate. Its function is as follows. Catalyzes the attachment of glutamate to tRNA(Glu) in a two-step reaction: glutamate is first activated by ATP to form Glu-AMP and then transferred to the acceptor end of tRNA(Glu). In Synechococcus sp. (strain JA-2-3B'a(2-13)) (Cyanobacteria bacterium Yellowstone B-Prime), this protein is Glutamate--tRNA ligase.